The following is a 363-amino-acid chain: tRNA-specific 2-thiouridylase MnmA (363 aa).

ATP contacts are provided by residues 6–13 and Leu32; that span reads AMSGGVDS. The Nucleophile role is filled by Cys101. Cys101 and Cys193 are oxidised to a cystine. Residue Gly125 coordinates ATP. The segment at 143 to 145 is interaction with tRNA; the sequence is KDQ. Catalysis depends on Cys193, which acts as the Cysteine persulfide intermediate.

Belongs to the MnmA/TRMU family.

Its subcellular location is the cytoplasm. It carries out the reaction S-sulfanyl-L-cysteinyl-[protein] + uridine(34) in tRNA + AH2 + ATP = 2-thiouridine(34) in tRNA + L-cysteinyl-[protein] + A + AMP + diphosphate + H(+). Its function is as follows. Catalyzes the 2-thiolation of uridine at the wobble position (U34) of tRNA, leading to the formation of s(2)U34. In Mycobacterium marinum (strain ATCC BAA-535 / M), this protein is tRNA-specific 2-thiouridylase MnmA.